The primary structure comprises 112 residues: Large ribosomal subunit protein uL22 (112 aa).

Belongs to the universal ribosomal protein uL22 family. As to quaternary structure, part of the 50S ribosomal subunit.

In terms of biological role, this protein binds specifically to 23S rRNA; its binding is stimulated by other ribosomal proteins, e.g. L4, L17, and L20. It is important during the early stages of 50S assembly. It makes multiple contacts with different domains of the 23S rRNA in the assembled 50S subunit and ribosome. Functionally, the globular domain of the protein is located near the polypeptide exit tunnel on the outside of the subunit, while an extended beta-hairpin is found that lines the wall of the exit tunnel in the center of the 70S ribosome. The sequence is that of Large ribosomal subunit protein uL22 from Desulfovibrio desulfuricans (strain ATCC 27774 / DSM 6949 / MB).